The following is a 367-amino-acid chain: Ribosomal RNA large subunit methyltransferase M (367 aa).

S-adenosyl-L-methionine contacts are provided by residues Ser-189, 222 to 225 (CPGG), Asp-241, Asp-261, and Asp-278. The Proton acceptor role is filled by Lys-307.

Belongs to the class I-like SAM-binding methyltransferase superfamily. RNA methyltransferase RlmE family. RlmM subfamily. Monomer.

It is found in the cytoplasm. It catalyses the reaction cytidine(2498) in 23S rRNA + S-adenosyl-L-methionine = 2'-O-methylcytidine(2498) in 23S rRNA + S-adenosyl-L-homocysteine + H(+). In terms of biological role, catalyzes the 2'-O-methylation at nucleotide C2498 in 23S rRNA. The sequence is that of Ribosomal RNA large subunit methyltransferase M from Shewanella denitrificans (strain OS217 / ATCC BAA-1090 / DSM 15013).